We begin with the raw amino-acid sequence, 527 residues long: MAPERLRSRTVSAFKLRGLLLRSEATKYLTEALQSVTELELEENLGKIIDAVEKQPLSSNMIERSVVEAAVQECSQSMDETIEHVFNIIGAFDIPRFIYNSERKKFLPLSMTNHAAPTLFGTARDKAELYLERYTILHQRTHRHELFTPPVIGSHLEESGSKFQLKTIETLLGSTSKVGDVIVLGMITQLKEGKFFLEDPTGTVQLDLSKAQFHSGLYTEACFVLAEGWFEDQVFHANAFGFPPTEPSSTTRAYYGNINFFGGPSNASVKTYTKLRQLEDENKDAMFVIVSDVWLDQVQVLEKFHVMFSGYSPAPPTCFILCGNFSSAPYGKNQVQALKDSLKSLADIICEYPSIHQSSRFVFVPGPEDPGFGSILPRPPLAESITQEFRQRVPFSVFTTNPCRIQYCTQEIIIFREDLVNKMCRNCVRFPSSSLDIPTHFVKTILSQGHLAPLPLYVCPVHWAYDYTLRVYPVPDLLVIADKYDPFTVTNTDCLCINPGSFPRSGFAFKVFYPSSKTVEDSKLQGF.

Belongs to the DNA polymerase epsilon subunit B family. In terms of assembly, component of the DNA polymerase epsilon complex consisting of four subunits: the catalytic subunit POLE and the accessory subunits POLE2, POLE3 and POLE4.

It is found in the nucleus. Its function is as follows. Accessory component of the DNA polymerase epsilon complex. Participates in DNA repair and in chromosomal DNA replication. The protein is DNA polymerase epsilon subunit 2 (Pole2) of Mus musculus (Mouse).